We begin with the raw amino-acid sequence, 161 residues long: Allophycocyanin beta chain (161 aa).

Asparagine 71 bears the N4-methylasparagine mark. Cysteine 81 serves as a coordination point for (2R,3E)-phycocyanobilin.

The protein belongs to the phycobiliprotein family. Heterodimer of an alpha and a beta chain. Contains one covalently linked phycocyanobilin chromophore.

Its subcellular location is the cellular thylakoid membrane. Functionally, light-harvesting photosynthetic bile pigment-protein from the phycobiliprotein complex. Allophycocyanin has a maximum absorption at approximately 650 nanometers. The chain is Allophycocyanin beta chain (apcB) from Synechocystis sp. (strain PCC 6714) (Aphanocapsa sp. (strain PCC 6714)).